The chain runs to 596 residues: UvrABC system protein C (596 aa).

The region spanning 14–91 (DQPGCYLMKD…IKLHDPKYNV (78 aa)) is the GIY-YIG domain. The region spanning 196–231 (EAVKKELEVKMLAAAENLEFERAKEFRDQIAHIDTV) is the UVR domain.

Belongs to the UvrC family. As to quaternary structure, interacts with UvrB in an incision complex.

The protein resides in the cytoplasm. Its function is as follows. The UvrABC repair system catalyzes the recognition and processing of DNA lesions. UvrC both incises the 5' and 3' sides of the lesion. The N-terminal half is responsible for the 3' incision and the C-terminal half is responsible for the 5' incision. The chain is UvrABC system protein C from Lysinibacillus sphaericus (strain C3-41).